The following is a 42-amino-acid chain: Ostricacin-4 (42 aa).

Intrachain disulfides connect Cys-8-Cys-36, Cys-15-Cys-30, and Cys-20-Cys-37.

It localises to the secreted. Functionally, has antibacterial activity against the Gram-positive bacterium S.aureus 1056 MRSA (MIC=11.48 ug/ml) and the Gram-negative bacterium E.coli O157:H7 (MIC=12.03 ug/ml). Does not have antifungal activity against the yeast C.albicans 3153A. The chain is Ostricacin-4 from Struthio camelus (Common ostrich).